The sequence spans 348 residues: tRNA N6-adenosine threonylcarbamoyltransferase (348 aa).

Positions 114 and 118 each coordinate Fe cation. Substrate contacts are provided by residues 137–141 (LVSGG), Asp-171, Gly-184, Asp-188, and Asn-283. Asp-311 is a Fe cation binding site.

Belongs to the KAE1 / TsaD family. It depends on Fe(2+) as a cofactor.

It localises to the cytoplasm. It carries out the reaction L-threonylcarbamoyladenylate + adenosine(37) in tRNA = N(6)-L-threonylcarbamoyladenosine(37) in tRNA + AMP + H(+). Required for the formation of a threonylcarbamoyl group on adenosine at position 37 (t(6)A37) in tRNAs that read codons beginning with adenine. Is involved in the transfer of the threonylcarbamoyl moiety of threonylcarbamoyl-AMP (TC-AMP) to the N6 group of A37, together with TsaE and TsaB. TsaD likely plays a direct catalytic role in this reaction. This Nocardioides sp. (strain ATCC BAA-499 / JS614) protein is tRNA N6-adenosine threonylcarbamoyltransferase.